The primary structure comprises 370 residues: Aminomethyltransferase (370 aa).

It belongs to the GcvT family. The glycine cleavage system is composed of four proteins: P, T, L and H.

It carries out the reaction N(6)-[(R)-S(8)-aminomethyldihydrolipoyl]-L-lysyl-[protein] + (6S)-5,6,7,8-tetrahydrofolate = N(6)-[(R)-dihydrolipoyl]-L-lysyl-[protein] + (6R)-5,10-methylene-5,6,7,8-tetrahydrofolate + NH4(+). Functionally, the glycine cleavage system catalyzes the degradation of glycine. This is Aminomethyltransferase from Prochlorococcus marinus (strain AS9601).